Reading from the N-terminus, the 351-residue chain is Methylxanthine N1-demethylase NdmA (351 aa).

Residues 17-125 (WHPVCTVTEL…CEERYGLIWI (109 aa)) enclose the Rieske domain. Residues C62, H64, C81, and H84 each coordinate [2Fe-2S] cluster.

It depends on [2Fe-2S] cluster as a cofactor.

The catalysed reaction is caffeine + NADH + O2 + H(+) = theobromine + formaldehyde + NAD(+) + H2O. It catalyses the reaction caffeine + NADPH + O2 + H(+) = theobromine + formaldehyde + NADP(+) + H2O. It carries out the reaction theophylline + NADH + O2 + H(+) = 3-methylxanthine + formaldehyde + NAD(+) + H2O. The enzyme catalyses theophylline + NADPH + O2 + H(+) = 3-methylxanthine + formaldehyde + NADP(+) + H2O. The catalysed reaction is 1,7-dimethylxanthine + NADH + O2 + H(+) = 7-methylxanthine + formaldehyde + NAD(+) + H2O. It catalyses the reaction 1,7-dimethylxanthine + NADPH + O2 + H(+) = 7-methylxanthine + formaldehyde + NADP(+) + H2O. It functions in the pathway alkaloid degradation. Its function is as follows. Involved in the caffeine degradation, which is the essential first step for assimilating the carbon and nitrogen in caffeine. Catalyzes the N1-demethylation of caffeine to produce theobromine and formaldehyde. Also catalyzes the N1-demethylation of theophylline, paraxanthine, and 1-methylxanthine to 3-methylxanthine, 7-methylxanthine, and xanthine, respectively. NADH is the preferred substrate. The sequence is that of Methylxanthine N1-demethylase NdmA (ndmA) from Pseudomonas putida (Arthrobacter siderocapsulatus).